A 301-amino-acid chain; its full sequence is tRNA dimethylallyltransferase (301 aa).

8 to 15 (GPTAVGKT) contributes to the ATP binding site. A substrate-binding site is contributed by 10 to 15 (TAVGKT). The interaction with substrate tRNA stretch occupies residues 33 to 36 (DSRQ).

The protein belongs to the IPP transferase family. In terms of assembly, monomer. Mg(2+) is required as a cofactor.

The catalysed reaction is adenosine(37) in tRNA + dimethylallyl diphosphate = N(6)-dimethylallyladenosine(37) in tRNA + diphosphate. In terms of biological role, catalyzes the transfer of a dimethylallyl group onto the adenine at position 37 in tRNAs that read codons beginning with uridine, leading to the formation of N6-(dimethylallyl)adenosine (i(6)A). This Thermosipho africanus (strain TCF52B) protein is tRNA dimethylallyltransferase.